We begin with the raw amino-acid sequence, 178 residues long: ATP synthase subunit delta (178 aa).

Belongs to the ATPase delta chain family. As to quaternary structure, F-type ATPases have 2 components, F(1) - the catalytic core - and F(0) - the membrane proton channel. F(1) has five subunits: alpha(3), beta(3), gamma(1), delta(1), epsilon(1). F(0) has three main subunits: a(1), b(2) and c(10-14). The alpha and beta chains form an alternating ring which encloses part of the gamma chain. F(1) is attached to F(0) by a central stalk formed by the gamma and epsilon chains, while a peripheral stalk is formed by the delta and b chains.

The protein localises to the cell membrane. Its function is as follows. F(1)F(0) ATP synthase produces ATP from ADP in the presence of a proton or sodium gradient. F-type ATPases consist of two structural domains, F(1) containing the extramembraneous catalytic core and F(0) containing the membrane proton channel, linked together by a central stalk and a peripheral stalk. During catalysis, ATP synthesis in the catalytic domain of F(1) is coupled via a rotary mechanism of the central stalk subunits to proton translocation. Functionally, this protein is part of the stalk that links CF(0) to CF(1). It either transmits conformational changes from CF(0) to CF(1) or is implicated in proton conduction. The chain is ATP synthase subunit delta from Streptococcus sanguinis (strain SK36).